The following is a 2179-amino-acid chain: Genome polyprotein (2179 aa).

Positions 763–765 (RGD) match the Cell attachment site motif. The 96-residue stretch at 786–881 (LAYLDRGFYK…IFGSHSLSQH (96 aa)) folds into the LRAT domain. The active-site For protein 2A H-NC is the H796. C865 (for protein 2A H-NC; Acyl-thioester intermediate) is an active-site residue. The 162-residue stretch at 1156–1317 (FQELARIPNR…KHYSKSGKLN (162 aa)) folds into the SF3 helicase domain. 1184–1191 (GEPGQGKS) is an ATP binding site. Y1493 carries the post-translational modification O-(5'-phospho-RNA)-tyrosine. One can recognise a Peptidase C3 domain in the interval 1517–1707 (APYDGQLEHI…IPFNFLKNDM (191 aa)). Catalysis depends on for protease 3C activity residues H1557, D1595, and C1669. The active-site Acyl-thioester intermediate is the C1896. In terms of domain architecture, RdRp catalytic spans 1944–2058 (DYNYEMDYSQ…SLDKEIEPER (115 aa)). Positions 1950 and 2044 each coordinate Mg(2+).

The protein belongs to the picornaviruses polyprotein family. As to quaternary structure, interacts with capsid protein VP1 and capsid protein VP3 to form heterotrimeric protomers. Five protomers subsequently associate to form pentamers which serve as building blocks for the capsid. In terms of assembly, interacts with capsid protein VP0, and capsid protein VP3 to form heterotrimeric protomers. Five protomers subsequently associate to form pentamers which serve as building blocks for the capsid. Interacts with capsid protein VP0 and capsid protein VP1 to form heterotrimeric protomers. Five protomers subsequently associate to form pentamers which serve as building blocks for the capsid. As to quaternary structure, homohexamer; forms a hexameric ring structure with 6-fold symmetry characteristic of AAA+ ATPases. In terms of assembly, homodimer. Interacts with host ACBD3. Interacts with RNA-directed RNA polymerase. As to quaternary structure, interacts with Viral protein genome-linked. Mg(2+) is required as a cofactor. In terms of processing, VPg is uridylylated by the polymerase and is covalently linked to the 5'-end of genomic RNA. This uridylylated form acts as a nucleotide-peptide primer for the polymerase. Specific enzymatic cleavages yield mature proteins. All cleavages are catalyzed by P3C.

It is found in the virion. The protein resides in the host cytoplasm. It localises to the host nucleus. Its subcellular location is the host nucleolus. The protein localises to the host cytoplasmic vesicle membrane. The enzyme catalyses RNA(n) + a ribonucleoside 5'-triphosphate = RNA(n+1) + diphosphate. The catalysed reaction is a ribonucleoside 5'-triphosphate + H2O = a ribonucleoside 5'-diphosphate + phosphate + H(+). It catalyses the reaction Selective cleavage of Gln-|-Gly bond in the poliovirus polyprotein. In other picornavirus reactions Glu may be substituted for Gln, and Ser or Thr for Gly.. Forms an icosahedral capsid of pseudo T=3 symmetry together with capsid proteins VP1 and VP3. The capsid is 300 Angstroms in diameter, composed of 60 copies of each capsid protein and enclosing the viral positive strand RNA genome. Capsid proteins interact with host alpha-V/beta-3 integrin heterodimer to provide virion attachment target cell. This attachment induces virion internalization predominantly through clathrin-mediated endocytosis. Binds packaging signals present in the viral RNA. Functionally, forms an icosahedral capsid of pseudo T=3 symmetry together with capsid proteins VP0 and VP1. The capsid is 300 Angstroms in diameter, composed of 60 copies of each capsid protein and enclosing the viral positive strand RNA genome. Capsid proteins interact with host alpha-V/beta-3 integrin heterodimer to provide virion attachment target cell. This attachment induces virion internalization predominantly through clathrin-mediated endocytosis. Binds packaging signals present in the viral RNA. In terms of biological role, forms an icosahedral capsid of pseudo T=3 symmetry together with capsid proteins VP0 and VP3. The capsid is 300 Angstroms in diameter, composed of 60 copies of each capsid protein and enclosing the viral positive strand RNA genome. Capsid proteins interact with host alpha-V/beta-3 integrin heterodimer to provide virion attachment target cell. This attachment induces virion internalization predominantly through clathrin-mediated endocytosis. Binds packaging signals present in the viral RNA. Its function is as follows. Is not a protease. Plays an essential role in the virus replication cycle by acting as a viroporin. Creates a pore in the host endoplasmic reticulum and as a consequence releases Ca2+ in the cytoplasm of infected cell. In turn, high levels of cytoplasmic calcium may trigger membrane trafficking and transport of viral ER-associated proteins to viroplasms, sites of viral genome replication. Functionally, induces and associates with structural rearrangements of intracellular membranes. Displays RNA-binding, nucleotide binding and NTPase activities. May play a role in virion morphogenesis and viral RNA encapsidation by interacting with the capsid protein VP3. In terms of biological role, localizes the viral replication complex to the surface of membranous vesicles. It inhibits host cell endoplasmic reticulum-to-Golgi apparatus transport and causes the disassembly of the Golgi complex, possibly through GBF1 interaction. This would result in depletion of MHC, trail receptors and IFN receptors at the host cell surface. Plays an essential role in viral RNA replication by recruiting ACBD3 and PI4KB at the viral replication sites, thereby allowing the formation of the rearranged membranous structures where viral replication takes place. Its function is as follows. Acts as a primer for viral RNA replication and remains covalently bound to viral genomic RNA. VPg is uridylylated prior to priming replication into VPg-pUpU. The VPg-pUpU is then used as primer on the genomic RNA poly(A) by the RNA-dependent RNA polymerase to replicate the viral genome. Following genome release from the infecting virion in the cytoplasm, the VPg-RNA linkage is probably removed by host TDP2. During the late stage of the replication cycle, host TDP2 is excluded from sites of viral RNA synthesis and encapsidation, allowing for the generation of progeny virions. Cysteine protease that generates mature viral proteins from the precursor polyprotein. In addition to its proteolytic activity, it binds to viral RNA, and thus influences viral genome replication. RNA and substrate bind cooperatively to the protease. Functionally, replicates the viral genomic RNA on the surface of intracellular membranes. Covalently attaches UMP to a tyrosine of VPg, which is used to prime RNA synthesis. The positive stranded RNA genome is first replicated at virus induced membranous vesicles, creating a dsRNA genomic replication form. This dsRNA is then used as template to synthesize positive stranded RNA genomes. ss(+)RNA genomes are either translated, replicated or encapsidated. The sequence is that of Genome polyprotein from Human parechovirus 2 (strain Williamson) (HPeV-2).